The following is a 312-amino-acid chain: Acetyl-coenzyme A carboxylase carboxyl transferase subunit beta (312 aa).

The interval 1–52 (MEMDTAVENPAVEKNGQPTPSSTSTATDAAPTPNAPNRPAPNTAGNRKRGVP) is disordered. The span at 18 to 32 (PTPSSTSTATDAAPT) shows a compositional bias: low complexity. Residues 55–312 (VWRKCDSCGA…IATAIDYCGK (258 aa)) form the CoA carboxyltransferase N-terminal domain. Cys59, Cys62, Cys78, and Cys81 together coordinate Zn(2+). The C4-type zinc-finger motif lies at 59–81 (CDSCGASLFYKEVQQRLNVCPQC).

It belongs to the AccD/PCCB family. As to quaternary structure, acetyl-CoA carboxylase is a heterohexamer composed of biotin carboxyl carrier protein (AccB), biotin carboxylase (AccC) and two subunits each of ACCase subunit alpha (AccA) and ACCase subunit beta (AccD). The cofactor is Zn(2+).

Its subcellular location is the cytoplasm. The catalysed reaction is N(6)-carboxybiotinyl-L-lysyl-[protein] + acetyl-CoA = N(6)-biotinyl-L-lysyl-[protein] + malonyl-CoA. It functions in the pathway lipid metabolism; malonyl-CoA biosynthesis; malonyl-CoA from acetyl-CoA: step 1/1. Functionally, component of the acetyl coenzyme A carboxylase (ACC) complex. Biotin carboxylase (BC) catalyzes the carboxylation of biotin on its carrier protein (BCCP) and then the CO(2) group is transferred by the transcarboxylase to acetyl-CoA to form malonyl-CoA. The protein is Acetyl-coenzyme A carboxylase carboxyl transferase subunit beta of Rhodopirellula baltica (strain DSM 10527 / NCIMB 13988 / SH1).